Here is a 222-residue protein sequence, read N- to C-terminus: uncharacterized protein (222 aa).

This is an uncharacterized protein from Fowlpox virus (strain NVSL) (FPV).